A 501-amino-acid polypeptide reads, in one-letter code: Probable malate:quinone oxidoreductase (501 aa).

The protein belongs to the MQO family. FAD serves as cofactor.

The catalysed reaction is (S)-malate + a quinone = a quinol + oxaloacetate. It functions in the pathway carbohydrate metabolism; tricarboxylic acid cycle; oxaloacetate from (S)-malate (quinone route): step 1/1. This chain is Probable malate:quinone oxidoreductase, found in Geobacillus kaustophilus (strain HTA426).